A 36-amino-acid polypeptide reads, in one-letter code: Peroxiredoxin-4 (36 aa).

This sequence belongs to the peroxiredoxin family. AhpC/Prx1 subfamily. As to quaternary structure, homodimer; disulfide-linked, upon oxidation. As to expression, venom gland.

The protein resides in the secreted. The enzyme catalyses a hydroperoxide + [thioredoxin]-dithiol = an alcohol + [thioredoxin]-disulfide + H2O. Its function is as follows. Venom peroxiredoxin enzyme that may play a role as part of a redox pathway leading to the structural/functional diversification of toxins through a disulfide bond engineering mechanism. The sequence is that of Peroxiredoxin-4 from Crotalus atrox (Western diamondback rattlesnake).